The sequence spans 337 residues: tRNA pseudouridine synthase D (337 aa).

Aspartate 77 (nucleophile) is an active-site residue. In terms of domain architecture, TRUD spans 152–308; it reads GFPNYFTEQR…ARDFHWEFVE (157 aa).

The protein belongs to the pseudouridine synthase TruD family.

It catalyses the reaction uridine(13) in tRNA = pseudouridine(13) in tRNA. In terms of biological role, responsible for synthesis of pseudouridine from uracil-13 in transfer RNAs. The chain is tRNA pseudouridine synthase D from Mannheimia succiniciproducens (strain KCTC 0769BP / MBEL55E).